We begin with the raw amino-acid sequence, 239 residues long: Tetratricopeptide repeat protein 9B (239 aa).

The tract at residues 1-54 is disordered; sequence MQRGALSPVLMLSAAPEPPPRPPPALSPPGPGSAPRHGSARSGPAPEPSGGLAA. A phosphoserine mark is found at Ser-7 and Ser-27. The segment covering 16-32 has biased composition (pro residues); sequence PEPPPRPPPALSPPGPG. The TPR 1 repeat unit spans residues 63 to 97; it reads AVAFKAEGQRCYREKKFREAIGKYHRALLQLKAAQ. The disordered stretch occupies residues 98-121; it reads GARPGGLPTPSPGPTTSPGPARLS. Residues 104 to 114 show a composition bias toward pro residues; that stretch reads LPTPSPGPTTS. One copy of the TPR 2 repeat lies at 169 to 202; the sequence is FKATYRAGIAFYHLGDYARALRYLQEARSREPTD.

It belongs to the TTC9 family.

The sequence is that of Tetratricopeptide repeat protein 9B (Ttc9b) from Mus musculus (Mouse).